We begin with the raw amino-acid sequence, 329 residues long: Malate dehydrogenase (329 aa).

Residue 12-18 coordinates NAD(+); it reads GAAGQIG. Positions 95 and 101 each coordinate substrate. Residues Asn108, Gln115, and 132-134 each bind NAD(+); that span reads VGN. Substrate-binding residues include Asn134 and Arg165. His190 (proton acceptor) is an active-site residue.

Belongs to the LDH/MDH superfamily. MDH type 2 family.

It carries out the reaction (S)-malate + NAD(+) = oxaloacetate + NADH + H(+). In terms of biological role, catalyzes the reversible oxidation of malate to oxaloacetate. The protein is Malate dehydrogenase of Ralstonia nicotianae (strain ATCC BAA-1114 / GMI1000) (Ralstonia solanacearum).